A 206-amino-acid polypeptide reads, in one-letter code: Small ribosomal subunit protein uS4 (206 aa).

In terms of domain architecture, S4 RNA-binding spans 96-156; the sequence is TRLDNVVYRM…EKSKKQARII (61 aa).

This sequence belongs to the universal ribosomal protein uS4 family. Part of the 30S ribosomal subunit. Contacts protein S5. The interaction surface between S4 and S5 is involved in control of translational fidelity.

One of the primary rRNA binding proteins, it binds directly to 16S rRNA where it nucleates assembly of the body of the 30S subunit. In terms of biological role, with S5 and S12 plays an important role in translational accuracy. The sequence is that of Small ribosomal subunit protein uS4 from Shewanella woodyi (strain ATCC 51908 / MS32).